Reading from the N-terminus, the 863-residue chain is Glycerol-3-phosphate acyltransferase (863 aa).

Residues 1–29 are disordered; that stretch reads MPKKNSPLLPKETTTTQSSVDTSGSSNLT. Positions 12–29 are enriched in polar residues; the sequence is ETTTTQSSVDTSGSSNLT. The HXXXXD motif signature appears at 343-348; the sequence is SHRSHI.

This sequence belongs to the GPAT/DAPAT family.

It localises to the cell inner membrane. It catalyses the reaction sn-glycerol 3-phosphate + an acyl-CoA = a 1-acyl-sn-glycero-3-phosphate + CoA. Its pathway is phospholipid metabolism; CDP-diacylglycerol biosynthesis; CDP-diacylglycerol from sn-glycerol 3-phosphate: step 1/3. In Xylella fastidiosa (strain M12), this protein is Glycerol-3-phosphate acyltransferase.